We begin with the raw amino-acid sequence, 356 residues long: Zinc finger CCCH domain-containing protein 49 (356 aa).

2 consecutive C3H1-type zinc fingers follow at residues 120-146 (YSGT…HGVF) and 155-177 (YRTQ…AHSP). A disordered region spans residues 209-235 (ISPVSGSPPMSPRADSESSPMTQSLSR). The span at 225-235 (ESSPMTQSLSR) shows a compositional bias: polar residues.

This is Zinc finger CCCH domain-containing protein 49 from Arabidopsis thaliana (Mouse-ear cress).